We begin with the raw amino-acid sequence, 155 residues long: Cardio acceleratory peptide 2b (155 aa).

Positions 1–26 are cleaved as a signal peptide; that stretch reads MKAIFSLYNIVSAILLLVLLAEFSTA. The propeptide occupies 27–33; the sequence is ELNHDKN. At V47 the chain carries Valine amide. The propeptide occupies 50-85; it reads SDPSLANSLRDASDAAVFDGLYGDASQEDYNEADYQ. Residue V96 is modified to Valine amide. Positions 99–117 are excised as a propeptide; sequence SDAELRKFAHLLALQQVLD. A Leucine amide modification is found at L134. Positions 138-155 are excised as a propeptide; sequence SVDAKAFSDASKGQQEFN.

It belongs to the pyrokinin family.

It localises to the secreted. Its function is as follows. CAP-1 and CAP-2, but not CAP-3 are ligands for the Capa receptor. CAP-1 and CAP-2 are probably components of the signal transduction pathway that leads to Malpighian tubule fluid secretion via the second messenger nitric oxide. This chain is Cardio acceleratory peptide 2b, found in Drosophila pseudoobscura pseudoobscura (Fruit fly).